A 238-amino-acid polypeptide reads, in one-letter code: uncharacterized protein (238 aa).

This is an uncharacterized protein from Frog virus 3 (isolate Goorha) (FV-3).